We begin with the raw amino-acid sequence, 321 residues long: Mitochondrial thiamine pyrophosphate carrier 1 (321 aa).

6 consecutive transmembrane segments (helical) span residues 12–28 (GTRR…GLVS), 91–107 (LMYV…YRTT), 126–146 (FVAG…LDLL), 184–200 (AAVG…FATY), 221–237 (AAGV…MFPL), and 284–301 (GLTV…VTMW). 3 Solcar repeats span residues 12-110 (GTRR…TTQA), 120-206 (PPSA…LRPP), and 214-309 (PFGS…SLRL).

This sequence belongs to the mitochondrial carrier (TC 2.A.29) family.

It localises to the mitochondrion inner membrane. Functionally, mitochondrial transporter that mediates uptake of thiamine pyrophosphate (ThPP) into mitochondria. This Aspergillus niger (strain ATCC MYA-4892 / CBS 513.88 / FGSC A1513) protein is Mitochondrial thiamine pyrophosphate carrier 1 (tpc1).